The sequence spans 319 residues: MAAKGGTVKPASGFSATEDAQTLRKAMKGLGTDEDAIISVLAPRNTSQRQEIRTAYKSTIGRDLMDDLKSELSGNFERVIVGMITPTVLYDVQELRRAMKGSGTDEGCLIEILASRTPEELRCINQTYQLQYGRSLEDVIRSDTSFMFQRVLVSLSAGGRDEGNFLDDALMRQDAQDLYEAGEKKWGTDEVKFLTVLCSRNRNHLLHVFDEYKRISQKDIEQGIKSETSGSFEDALLAIVKCMRNKSAYFAERLYKSMKGLGTDDNTLIRVMVSRAEIDMMDIRESFKRLYGKSLYSFIKGDTSGDYRKVLLILCGGDD.

Residue Ala2 is modified to N-acetylalanine. Phosphothreonine is present on Thr7. A Phosphoserine modification is found at Ser12. Annexin repeat units lie at residues 14–85, 86–157, 169–241, and 245–316; these read FSAT…GMIT, PTVL…SLSA, ALMR…AIVK, and NKSA…ILCG. N6-acetyllysine is present on residues Lys213, Lys293, and Lys300.

Belongs to the annexin family. Expressed in pancreas (at protein level). Also detected in liver, spleen, intestine, stomach, kidney, and adrenal glands.

Its subcellular location is the zymogen granule membrane. Calcium/phospholipid-binding protein which promotes membrane fusion and is involved in exocytosis. This chain is Annexin A4 (ANXA4), found in Canis lupus familiaris (Dog).